Reading from the N-terminus, the 375-residue chain is Queuine tRNA-ribosyltransferase (375 aa).

Aspartate 89 acts as the Proton acceptor in catalysis. Substrate is bound by residues 89-93 (DSGGF), aspartate 143, glutamine 187, and glycine 214. The RNA binding stretch occupies residues 245 to 251 (GVGKPED). The active-site Nucleophile is the aspartate 264. Positions 269-273 (TRNAR) are RNA binding; important for wobble base 34 recognition. Zn(2+) contacts are provided by cysteine 302, cysteine 304, cysteine 307, and histidine 333.

It belongs to the queuine tRNA-ribosyltransferase family. As to quaternary structure, homodimer. Within each dimer, one monomer is responsible for RNA recognition and catalysis, while the other monomer binds to the replacement base PreQ1. The cofactor is Zn(2+).

It catalyses the reaction 7-aminomethyl-7-carbaguanine + guanosine(34) in tRNA = 7-aminomethyl-7-carbaguanosine(34) in tRNA + guanine. It functions in the pathway tRNA modification; tRNA-queuosine biosynthesis. Catalyzes the base-exchange of a guanine (G) residue with the queuine precursor 7-aminomethyl-7-deazaguanine (PreQ1) at position 34 (anticodon wobble position) in tRNAs with GU(N) anticodons (tRNA-Asp, -Asn, -His and -Tyr). Catalysis occurs through a double-displacement mechanism. The nucleophile active site attacks the C1' of nucleotide 34 to detach the guanine base from the RNA, forming a covalent enzyme-RNA intermediate. The proton acceptor active site deprotonates the incoming PreQ1, allowing a nucleophilic attack on the C1' of the ribose to form the product. After dissociation, two additional enzymatic reactions on the tRNA convert PreQ1 to queuine (Q), resulting in the hypermodified nucleoside queuosine (7-(((4,5-cis-dihydroxy-2-cyclopenten-1-yl)amino)methyl)-7-deazaguanosine). This is Queuine tRNA-ribosyltransferase from Aliivibrio fischeri (strain ATCC 700601 / ES114) (Vibrio fischeri).